The following is an 873-amino-acid chain: Coatomer subunit gamma-2 (873 aa).

A compositionally biased stretch (basic and acidic residues) spans 1 to 11 (MIKKFDKKDEE). The tract at residues 1 to 21 (MIKKFDKKDEESGSGSNPFQH) is disordered. 6 HEAT repeats span residues 64–101 (TEATEAFFAMTRLFQSNDQTLRRMCYLTIKEMANISED), 283–320 (RELAPAVSVLQLFCSSPKAALRYAAVRTLNKVAMKHPS), 321–355 (AVTACNLDLENLITDSNRSIATLAITTLLKTGSES), 356–392 (SVDRLMKQISSFVSEISDEFKVVVVQAISALCQKYPR), 395–430 (SVMMNFLSNMLRDDGGFEYKRAIVDCIISIIEENPE), and 467–504 (PTPSKYIRFIFNRVVLESEAVRAAAVSALAKFGAQNDD).

The protein belongs to the COPG family. In terms of assembly, oligomeric complex.

It localises to the cytoplasm. The protein localises to the golgi apparatus membrane. Its subcellular location is the cytoplasmic vesicle. The protein resides in the COPI-coated vesicle membrane. Functionally, the coatomer is a cytosolic protein complex that binds to dilysine motifs and reversibly associates with Golgi non-clathrin-coated vesicles, which further mediate biosynthetic protein transport from the ER, via the Golgi up to the trans Golgi network. Coatomer complex is required for budding from Golgi membranes, and is essential for the retrograde Golgi-to-ER transport of dilysine-tagged proteins. The chain is Coatomer subunit gamma-2 (copg2) from Danio rerio (Zebrafish).